A 307-amino-acid chain; its full sequence is MIYTLTLNPSVDYKIVLKEFQEESLNYALNNNFFAGGKGINVSTVLKNLGKPSTALGFLGGFTGDYIRFSLDSRGIKNDFIKIKYDTRLNIKMIANGRETEINANSPDISENEFELLKNKLKNLANNSTLVMSGSVPAALGEDAYNEIANSISNDVKLIIDTSGKPLRKILRLNPFLIKPNIYELEDLFNAKFDSTKELIKIGKNLVESGVQNIIISMGSDGAIFIGGKNVAFRAFVPKINFVSTIGAGDSVIAGFVYAFDNGSTLEDSFKFGVAAGTATALKGNLCEFQDVKKMLCQIRVEDIYTS.

Residues 217–222 and 249–250 contribute to the ATP site; these read SMGSDG and GD. Asp250 acts as the Proton acceptor in catalysis.

It belongs to the carbohydrate kinase PfkB family.

It carries out the reaction beta-D-fructose 1-phosphate + ATP = beta-D-fructose 1,6-bisphosphate + ADP + H(+). Its function is as follows. Catalyzes the ATP-dependent phosphorylation of fructose-l-phosphate to fructose-l,6-bisphosphate. The chain is 1-phosphofructokinase (fruK) from Borreliella burgdorferi (strain ATCC 35210 / DSM 4680 / CIP 102532 / B31) (Borrelia burgdorferi).